The chain runs to 185 residues: GTP-dependent dephospho-CoA kinase (185 aa).

Positions 50, 52, 73, 75, and 128 each coordinate GTP.

This sequence belongs to the GTP-dependent DPCK family.

The catalysed reaction is 3'-dephospho-CoA + GTP = GDP + CoA + H(+). The protein operates within cofactor biosynthesis; coenzyme A biosynthesis. In terms of biological role, catalyzes the GTP-dependent phosphorylation of the 3'-hydroxyl group of dephosphocoenzyme A to form coenzyme A (CoA). This is GTP-dependent dephospho-CoA kinase from Aeropyrum pernix (strain ATCC 700893 / DSM 11879 / JCM 9820 / NBRC 100138 / K1).